The following is a 338-amino-acid chain: Holliday junction branch migration complex subunit RuvB (338 aa).

Residues 1 to 181 form a large ATPase domain (RuvB-L) region; the sequence is MEERILTQNF…FGVINRLDYY (181 aa). ATP is bound by residues L20, R21, G62, K65, T66, T67, 128–130, R171, Y181, and R218; that span reads EDF. Residue T66 coordinates Mg(2+). The tract at residues 182-252 is small ATPAse domain (RuvB-S); it reads SVEELKEIIK…TANIALNMLG (71 aa). The interval 255–338 is head domain (RuvB-H); the sequence is EMGLEEIDRK…YVEQRRIEDV (84 aa). DNA contacts are provided by R310 and R315.

The protein belongs to the RuvB family. In terms of assembly, homohexamer. Forms an RuvA(8)-RuvB(12)-Holliday junction (HJ) complex. HJ DNA is sandwiched between 2 RuvA tetramers; dsDNA enters through RuvA and exits via RuvB. An RuvB hexamer assembles on each DNA strand where it exits the tetramer. Each RuvB hexamer is contacted by two RuvA subunits (via domain III) on 2 adjacent RuvB subunits; this complex drives branch migration. In the full resolvosome a probable DNA-RuvA(4)-RuvB(12)-RuvC(2) complex forms which resolves the HJ.

Its subcellular location is the cytoplasm. The catalysed reaction is ATP + H2O = ADP + phosphate + H(+). Functionally, the RuvA-RuvB-RuvC complex processes Holliday junction (HJ) DNA during genetic recombination and DNA repair, while the RuvA-RuvB complex plays an important role in the rescue of blocked DNA replication forks via replication fork reversal (RFR). RuvA specifically binds to HJ cruciform DNA, conferring on it an open structure. The RuvB hexamer acts as an ATP-dependent pump, pulling dsDNA into and through the RuvAB complex. RuvB forms 2 homohexamers on either side of HJ DNA bound by 1 or 2 RuvA tetramers; 4 subunits per hexamer contact DNA at a time. Coordinated motions by a converter formed by DNA-disengaged RuvB subunits stimulates ATP hydrolysis and nucleotide exchange. Immobilization of the converter enables RuvB to convert the ATP-contained energy into a lever motion, pulling 2 nucleotides of DNA out of the RuvA tetramer per ATP hydrolyzed, thus driving DNA branch migration. The RuvB motors rotate together with the DNA substrate, which together with the progressing nucleotide cycle form the mechanistic basis for DNA recombination by continuous HJ branch migration. Branch migration allows RuvC to scan DNA until it finds its consensus sequence, where it cleaves and resolves cruciform DNA. This chain is Holliday junction branch migration complex subunit RuvB, found in Caldanaerobacter subterraneus subsp. tengcongensis (strain DSM 15242 / JCM 11007 / NBRC 100824 / MB4) (Thermoanaerobacter tengcongensis).